We begin with the raw amino-acid sequence, 253 residues long: Aspartic acid-rich protein (253 aa).

An N-terminal signal peptide occupies residues 1–22; the sequence is MYLFIYIFFFFFFFFFFVIVQK. Positions 211 to 253 are disordered; it reads DDFDEEFDDDDDDDDDDDDDDDDDDKDDDLDGDDDGNNDDNDD.

It belongs to the nucleosome assembly protein (NAP) family.

The polypeptide is Aspartic acid-rich protein (Plasmodium falciparum (isolate fcm17 / Senegal)).